Consider the following 937-residue polypeptide: Ubiquitin carboxyl-terminal hydrolase 37 (937 aa).

The KEN box 1 signature appears at 38-40 (RDN). 2 consecutive short sequence motifs (D-box) follow at residues 76–84 (RMTLTLKDS) and 101–110 (KEYLETVKLG). Positions 132-149 (TAQNDSGLSPSDKQSAPR) are enriched in polar residues. Disordered regions lie at residues 132 to 216 (TAQN…KAIT) and 232 to 258 (QSEE…SRTG). Residues 151-161 (SSLDSREDSTP) show a composition bias toward basic and acidic residues. Positions 162-170 (RKPLGSPSR) match the D-box 3 motif. The KEN box 2 motif lies at 204-206 (KEN). A USP domain is found at 322 to 911 (QGFSNLGNTC…SGYIFFYMHK (590 aa)). C331 acts as the Nucleophile in catalysis. Residues 609–625 (NSSTLRRASQRPESSGS) are compositionally biased toward polar residues. Disordered stretches follow at residues 609–632 (NSST…DSDS) and 688–710 (TSLC…GDAD). Residues 672-691 (NDEEMLAAVLEMSRHDTSLC) enclose the UIM 1 domain. A KEN box 3 motif is present at residues 742–744 (KEN). UIM domains lie at 766–785 (REEQ…QEAR) and 788–807 (REDD…FNNS). The active-site Proton acceptor is H866.

This sequence belongs to the peptidase C19 family.

The enzyme catalyses Thiol-dependent hydrolysis of ester, thioester, amide, peptide and isopeptide bonds formed by the C-terminal Gly of ubiquitin (a 76-residue protein attached to proteins as an intracellular targeting signal).. Functionally, deubiquitinase that antagonizes the anaphase-promoting complex (APC/C) during G1/S transition by mediating deubiquitination of APC/C target proteins, thereby promoting S phase entry. Specifically mediates deubiquitination of 'Lys-11'-linked polyubiquitin chains, a specific ubiquitin-linkage type mediated by the APC/C complex. The polypeptide is Ubiquitin carboxyl-terminal hydrolase 37 (usp37) (Danio rerio (Zebrafish)).